A 445-amino-acid polypeptide reads, in one-letter code: Ribosomal protein uS12 methylthiotransferase RimO (445 aa).

The 116-residue stretch at 4-119 folds into the MTTase N-terminal domain; the sequence is IKVALVSLGC…LLESIKVFLK (116 aa). [4Fe-4S] cluster-binding residues include cysteine 13, cysteine 48, cysteine 82, cysteine 156, cysteine 160, and cysteine 163. One can recognise a Radical SAM core domain in the interval 142–372; the sequence is TTPTYTAYVR…MILQQSISKD (231 aa). The TRAM domain maps to 375-441; sequence KEKIGKIYEV…EYDLIGVVYN (67 aa).

This sequence belongs to the methylthiotransferase family. RimO subfamily. The cofactor is [4Fe-4S] cluster.

The protein resides in the cytoplasm. It carries out the reaction L-aspartate(89)-[ribosomal protein uS12]-hydrogen + (sulfur carrier)-SH + AH2 + 2 S-adenosyl-L-methionine = 3-methylsulfanyl-L-aspartate(89)-[ribosomal protein uS12]-hydrogen + (sulfur carrier)-H + 5'-deoxyadenosine + L-methionine + A + S-adenosyl-L-homocysteine + 2 H(+). In terms of biological role, catalyzes the methylthiolation of an aspartic acid residue of ribosomal protein uS12. In Clostridium botulinum (strain Langeland / NCTC 10281 / Type F), this protein is Ribosomal protein uS12 methylthiotransferase RimO.